The following is a 239-amino-acid chain: 1-(5-phosphoribosyl)-5-[(5-phosphoribosylamino)methylideneamino] imidazole-4-carboxamide isomerase (239 aa).

The active-site Proton acceptor is the Asp8. Catalysis depends on Asp129, which acts as the Proton donor.

It belongs to the HisA/HisF family.

Its subcellular location is the cytoplasm. The enzyme catalyses 1-(5-phospho-beta-D-ribosyl)-5-[(5-phospho-beta-D-ribosylamino)methylideneamino]imidazole-4-carboxamide = 5-[(5-phospho-1-deoxy-D-ribulos-1-ylimino)methylamino]-1-(5-phospho-beta-D-ribosyl)imidazole-4-carboxamide. It functions in the pathway amino-acid biosynthesis; L-histidine biosynthesis; L-histidine from 5-phospho-alpha-D-ribose 1-diphosphate: step 4/9. This Bacillus cereus (strain Q1) protein is 1-(5-phosphoribosyl)-5-[(5-phosphoribosylamino)methylideneamino] imidazole-4-carboxamide isomerase.